Consider the following 512-residue polypeptide: 2,3-bisphosphoglycerate-independent phosphoglycerate mutase (512 aa).

The Mn(2+) site is built by Asp-11 and Ser-61. The Phosphoserine intermediate role is filled by Ser-61. Residues His-122, 152-153 (RD), Arg-184, Arg-190, 259-262 (RADR), and Lys-332 contribute to the substrate site. Residues Asp-399, His-403, Asp-440, His-441, and His-459 each contribute to the Mn(2+) site.

It belongs to the BPG-independent phosphoglycerate mutase family. Monomer. Mn(2+) is required as a cofactor.

The catalysed reaction is (2R)-2-phosphoglycerate = (2R)-3-phosphoglycerate. It functions in the pathway carbohydrate degradation; glycolysis; pyruvate from D-glyceraldehyde 3-phosphate: step 3/5. In terms of biological role, catalyzes the interconversion of 2-phosphoglycerate and 3-phosphoglycerate. This chain is 2,3-bisphosphoglycerate-independent phosphoglycerate mutase, found in Francisella tularensis subsp. novicida (strain U112).